Here is a 177-residue protein sequence, read N- to C-terminus: Dual-action ribosomal maturation protein DarP (177 aa).

The disordered stretch occupies residues 1 to 26 (MKIVGDSEHFKQPYDSDEEYVSKTED).

Belongs to the DarP family.

The protein resides in the cytoplasm. Member of a network of 50S ribosomal subunit biogenesis factors which assembles along the 30S-50S interface, preventing incorrect 23S rRNA structures from forming. Promotes peptidyl transferase center (PTC) maturation. This is Dual-action ribosomal maturation protein DarP from Shewanella sp. (strain MR-4).